A 358-amino-acid chain; its full sequence is Methionine aminopeptidase 2 (358 aa).

His-111 provides a ligand contact to substrate. Positions 131, 142, and 211 each coordinate a divalent metal cation. Residue His-219 participates in substrate binding. The a divalent metal cation site is built by Glu-244 and Glu-339.

Belongs to the peptidase M24A family. Methionine aminopeptidase eukaryotic type 2 subfamily. Requires Co(2+) as cofactor. Zn(2+) serves as cofactor. It depends on Mn(2+) as a cofactor. Fe(2+) is required as a cofactor.

The protein resides in the cytoplasm. It carries out the reaction Release of N-terminal amino acids, preferentially methionine, from peptides and arylamides.. Functionally, cotranslationally removes the N-terminal methionine from nascent proteins. The N-terminal methionine is often cleaved when the second residue in the primary sequence is small and uncharged (Met-Ala-, Cys, Gly, Pro, Ser, Thr, or Val). The protein is Methionine aminopeptidase 2 of Laccaria bicolor (strain S238N-H82 / ATCC MYA-4686) (Bicoloured deceiver).